Reading from the N-terminus, the 251-residue chain is NADPH-dependent oxidoreductase (251 aa).

The protein belongs to the flavin oxidoreductase frp family. The cofactor is FMN.

Reduces FMN, organic nitro compounds and disulfide DTNB. Involved in maintenance of the cellular redox state and the disulfide stress response. This is NADPH-dependent oxidoreductase (nfrA) from Staphylococcus epidermidis (strain ATCC 12228 / FDA PCI 1200).